The primary structure comprises 459 residues: DIMBOA UDP-glucosyltransferase BX8 (459 aa).

His-19 functions as the Proton acceptor in the catalytic mechanism. His-19 contributes to the an anthocyanidin binding site. Asp-119 (charge relay) is an active-site residue. Thr-141, Ala-340, Gln-342, His-357, Trp-360, Asn-361, Ser-362, and Glu-365 together coordinate UDP-alpha-D-glucose. Gly-380 is a binding site for an anthocyanidin. Positions 381 and 382 each coordinate UDP-alpha-D-glucose.

Belongs to the UDP-glycosyltransferase family. The cofactor is Mg(2+). Ca(2+) is required as a cofactor. In terms of tissue distribution, expressed at the same levels in roots and shoots.

The catalysed reaction is DIMBOA + UDP-alpha-D-glucose = DIMBOA beta-D-glucoside + UDP + H(+). It catalyses the reaction DIBOA + UDP-alpha-D-glucose = DIBOA beta-D-glucoside + UDP + H(+). In terms of biological role, glucosyltransferase involved in the last step of benzoxazinoid glucoside biosynthesis. Catalyzes the glucosylation of hydroxamic acids utilizing UDP-glucose as glucose doner, reducing the toxicity of these natural insecticides for storage. Can use DIMBOA and DIBOA as substrates, HMBOA (2-hydroxy-7-methoxy-2H-1,4-benzoxazin-3(4H)-one) and HBOA (2-hydroxy-2H-1,4-benzoxazin-3(4H)-one) with a lower efficiency, but not indole acetic acid or quercitin. This Zea mays (Maize) protein is DIMBOA UDP-glucosyltransferase BX8 (Bx8).